A 421-amino-acid polypeptide reads, in one-letter code: Histidine--tRNA ligase (421 aa).

The protein belongs to the class-II aminoacyl-tRNA synthetase family.

It is found in the cytoplasm. It carries out the reaction tRNA(His) + L-histidine + ATP = L-histidyl-tRNA(His) + AMP + diphosphate + H(+). The chain is Histidine--tRNA ligase from Pyrobaculum islandicum (strain DSM 4184 / JCM 9189 / GEO3).